The chain runs to 89 residues: Small ribosomal subunit protein uS15 (89 aa).

This sequence belongs to the universal ribosomal protein uS15 family. As to quaternary structure, part of the 30S ribosomal subunit. Forms a bridge to the 50S subunit in the 70S ribosome, contacting the 23S rRNA.

Functionally, one of the primary rRNA binding proteins, it binds directly to 16S rRNA where it helps nucleate assembly of the platform of the 30S subunit by binding and bridging several RNA helices of the 16S rRNA. Its function is as follows. Forms an intersubunit bridge (bridge B4) with the 23S rRNA of the 50S subunit in the ribosome. The sequence is that of Small ribosomal subunit protein uS15 from Corynebacterium aurimucosum (strain ATCC 700975 / DSM 44827 / CIP 107346 / CN-1) (Corynebacterium nigricans).